We begin with the raw amino-acid sequence, 35 residues long: Cupiennin-2b (35 aa).

At glutamine 35 the chain carries Glutamine amide.

As to expression, expressed by the venom gland.

It is found in the secreted. This Cupiennius salei (American wandering spider) protein is Cupiennin-2b.